The sequence spans 473 residues: MSSSLWLQCLQQLQEELPATEFSMWVRPLQAELNGNTLTLFAPNRFVLDWVRDKYLNSINRLLQEYCGNDIPHLHFEIGNKRVTAPKSETIAPARTRTAADVAAESSAPAQLQARKPVHNIWRDEEPVAVDLNHRSNVNPKHKFNNFVEGKSNQLGLAAARQVSDNPGTAYNPLFLYGGTGLGKTHLLHAVGNAIVDNKPNAKVVYMHSERFVQDMVKALQNNAIEEFKRYYRSVDALLIDDIQFFANKERSQEEFFHTFNALLEGNQQIILTSDRYPKEINGVEDRLKSRFGWGLTVAIEPPELETRVAILMKKAEDHQIHLADEVAFFIAKRLRSNVRELEGALNRVIANANFTGRPITIDFVREALRDLLALQEKLVTIDNIQKTVAEYYKIKVADLLSKRRSRSVARPRQLAMALAKELTNHSLPEIGDAFGGRDHTTVLHACRKIAQLREESHDIKEDYSNLIRTLSS.

Positions 1-90 are domain I, interacts with DnaA modulators; that stretch reads MSSSLWLQCL…KRVTAPKSET (90 aa). The interval 91-136 is domain II; it reads IAPARTRTAADVAAESSAPAQLQARKPVHNIWRDEEPVAVDLNHRS. The segment at 137–353 is domain III, AAA+ region; it reads NVNPKHKFNN…GALNRVIANA (217 aa). The ATP site is built by glycine 181, glycine 183, lysine 184, and threonine 185. The domain IV, binds dsDNA stretch occupies residues 354-473; it reads NFTGRPITID…YSNLIRTLSS (120 aa).

It belongs to the DnaA family. As to quaternary structure, oligomerizes as a right-handed, spiral filament on DNA at oriC.

Its subcellular location is the cytoplasm. In terms of biological role, plays an essential role in the initiation and regulation of chromosomal replication. ATP-DnaA binds to the origin of replication (oriC) to initiate formation of the DNA replication initiation complex once per cell cycle. Binds the DnaA box (a 9 base pair repeat at the origin) and separates the double-stranded (ds)DNA. Forms a right-handed helical filament on oriC DNA; dsDNA binds to the exterior of the filament while single-stranded (ss)DNA is stabiized in the filament's interior. The ATP-DnaA-oriC complex binds and stabilizes one strand of the AT-rich DNA unwinding element (DUE), permitting loading of DNA polymerase. After initiation quickly degrades to an ADP-DnaA complex that is not apt for DNA replication. Binds acidic phospholipids. This is Chromosomal replication initiator protein DnaA from Vibrio atlanticus (strain LGP32) (Vibrio splendidus (strain Mel32)).